Here is a 263-residue protein sequence, read N- to C-terminus: Putative hydro-lyase GK2103 (263 aa).

The protein belongs to the D-glutamate cyclase family.

The protein is Putative hydro-lyase GK2103 of Geobacillus kaustophilus (strain HTA426).